A 218-amino-acid chain; its full sequence is Large ribosomal subunit protein uL3 (218 aa).

Belongs to the universal ribosomal protein uL3 family. Part of the 50S ribosomal subunit. Forms a cluster with proteins L14 and L19.

Its function is as follows. One of the primary rRNA binding proteins, it binds directly near the 3'-end of the 23S rRNA, where it nucleates assembly of the 50S subunit. In Mycolicibacterium gilvum (strain PYR-GCK) (Mycobacterium gilvum (strain PYR-GCK)), this protein is Large ribosomal subunit protein uL3.